An 896-amino-acid chain; its full sequence is Alanine--tRNA ligase (896 aa).

Histidine 574, histidine 578, cysteine 677, and histidine 681 together coordinate Zn(2+).

This sequence belongs to the class-II aminoacyl-tRNA synthetase family. It depends on Zn(2+) as a cofactor.

It localises to the cytoplasm. It catalyses the reaction tRNA(Ala) + L-alanine + ATP = L-alanyl-tRNA(Ala) + AMP + diphosphate. Its function is as follows. Catalyzes the attachment of alanine to tRNA(Ala) in a two-step reaction: alanine is first activated by ATP to form Ala-AMP and then transferred to the acceptor end of tRNA(Ala). Also edits incorrectly charged Ser-tRNA(Ala) and Gly-tRNA(Ala) via its editing domain. This Mycoplasma capricolum subsp. capricolum (strain California kid / ATCC 27343 / NCTC 10154) protein is Alanine--tRNA ligase.